Reading from the N-terminus, the 467-residue chain is 3-isopropylmalate dehydratase large subunit (467 aa).

Residues cysteine 348, cysteine 409, and cysteine 412 each coordinate [4Fe-4S] cluster. A disordered region spans residues asparagine 423–proline 449.

Belongs to the aconitase/IPM isomerase family. LeuC type 1 subfamily. In terms of assembly, heterodimer of LeuC and LeuD. [4Fe-4S] cluster is required as a cofactor.

It carries out the reaction (2R,3S)-3-isopropylmalate = (2S)-2-isopropylmalate. It functions in the pathway amino-acid biosynthesis; L-leucine biosynthesis; L-leucine from 3-methyl-2-oxobutanoate: step 2/4. Catalyzes the isomerization between 2-isopropylmalate and 3-isopropylmalate, via the formation of 2-isopropylmaleate. The protein is 3-isopropylmalate dehydratase large subunit of Bifidobacterium longum subsp. infantis (strain ATCC 15697 / DSM 20088 / JCM 1222 / NCTC 11817 / S12).